An 810-amino-acid chain; its full sequence is MPIPFKPVLAVAAIAQAFPAFAADPAPQSAQTLNEITVTGTHKTQKLGEEKIRRKTLDKLLVNDEHDLVRYDPGISVVEGGRAGSNGFTIRGVDKDRVAINVDGLAQAESRSSEAFQELFGAYGNFNANRNTSEPENFSEVTITKGADSLKSGSGALGGAVNYQTKSASDYVSEDKPYHLGIKGGSVGKNSQKFSSITAAGRLFGLDALLVYTRRFGKETKNRSTEGNVEIKNDGYVYNPTDTGGPSKYLTYVATGVARSQPDPQEWVNKSTLFKLGYNFNDQNRIGWIFEDSRTDRFTNELSNLWTGTTTSAATGDYRHRQDVSYRRRSGVEYKNELEHGPWDSLKLRYDKQRIDMNTWTWDIPKNYDLRGINSEVYHSFRHIRQNTAQWTADFEKQLDFSKAVWAAQYGLGGGRGDNANSDYSYFVKLYDPKILTSNQAKITMLIENRSKYKFAYWNNVFHLGGNDRFRLNAGIRYDKNSSSAKDDPKYTTAIRGQIPHLGSERAHAGFSYGTGFDWRFTKHLHLLAKYSTGFRAPTSDETWLLFPHPDFYLKANPNLKAEKAKNWELGLAGSGKAGNFKLSGFKTKYRDFIELTYMGVSSDNPNKPTYAPLSDGTALVSSPVWQNQNRSSAWVKGLEFNGTWNLDSIGLPQGTHAGVNVSYIKGKAKQTNGQETPINALSPWSAVYNLGYDAPSKRWGINAYATRTAAKKPSDTVHSNDDLNNPWPYAKHSKAYTLFDLSAYLNIGKQVTLRAAAYNITNKQYYTWESLRSIREFGTVNRVDNKTHAGIQRFTSPGRSYNFTIEAKF.

A signal peptide spans 1-22 (MPIPFKPVLAVAAIAQAFPAFA). One can recognise a TBDR plug domain in the interval 34–166 (NEITVTGTHK…LGGAVNYQTK (133 aa)). A TBDR beta-barrel domain is found at 175–810 (DKPYHLGIKG…SYNFTIEAKF (636 aa)). The TonB C-terminal box motif lies at 793 to 810 (QRFTSPGRSYNFTIEAKF).

This sequence belongs to the TonB-dependent receptor family.

The protein localises to the cell outer membrane. Acts as a receptor for hemoglobin or the hemoglobin/haptoglobin complex and is required for heme uptake. This Neisseria meningitidis serogroup C protein is Hemoglobin-haptoglobin utilization protein B (hpuB).